Consider the following 748-residue polypeptide: Formate acetyltransferase (748 aa).

A PFL domain is found at 5–618 (NNHTNAWQGF…KTGNTPDGRK (614 aa)). The active-site S-acetylcysteine intermediate is the Cys412. Catalysis depends on Cys413, which acts as the Cysteine radical intermediate. Positions 625 to 748 (PGANPMHGRD…VISRTFHESM (124 aa)) constitute a Glycine radical domain. A Glycine radical modification is found at Gly723.

It belongs to the glycyl radical enzyme (GRE) family. PFL subfamily. As to quaternary structure, homodimer.

The protein resides in the cytoplasm. The catalysed reaction is formate + acetyl-CoA = pyruvate + CoA. The protein operates within fermentation; pyruvate fermentation; formate from pyruvate: step 1/1. Functionally, catalyzes the conversion of pyruvate to formate and acetyl-CoA. The polypeptide is Formate acetyltransferase (pflB) (Staphylococcus epidermidis (strain ATCC 35984 / DSM 28319 / BCRC 17069 / CCUG 31568 / BM 3577 / RP62A)).